The following is a 916-amino-acid chain: Extracellular signal-regulated kinase 7 (916 aa).

The 295-residue stretch at 25–319 (FDVRKRMGKG…AKEAIRHPYV (295 aa)) folds into the Protein kinase domain. Residues 31 to 39 (MGKGAYGIV) and Lys54 each bind ATP. The Proton acceptor role is filled by Asp149. Polar residues-rich tracts occupy residues 364-376 (CSNR…TPSS) and 390-403 (QART…TTSP). Disordered stretches follow at residues 364-419 (CSNR…TQSR), 452-477 (PPAA…KSVP), 588-608 (PSET…QMKR), 711-742 (KKLQ…SQNY), 792-813 (ELNP…PGRD), and 883-916 (CRHR…PESN). Composition is skewed to basic and acidic residues over residues 590–608 (ETEH…QMKR), 715–730 (RSKE…RRAL), and 800–811 (GGRDSGSEHSPG). Residues 883–892 (CRHRHHKPNH) show a composition bias toward basic residues. Residues 894 to 903 (APYDHMRPTE) show a composition bias toward basic and acidic residues.

The protein belongs to the protein kinase superfamily. Ser/Thr protein kinase family.

It catalyses the reaction L-seryl-[protein] + ATP = O-phospho-L-seryl-[protein] + ADP + H(+). The catalysed reaction is L-threonyl-[protein] + ATP = O-phospho-L-threonyl-[protein] + ADP + H(+). Atypical MAPK protein that regulates protein secretion in a kinase activity-dependent manner. In response to starvation regulates protein secretion by mediating transitional endoplasmic reticulum site disassembly. Mediates inhibition of insulin-like peptide secretion upon disturbed ribosome biogenesis and acts as a downstream effector of TP53. In Drosophila melanogaster (Fruit fly), this protein is Extracellular signal-regulated kinase 7.